The chain runs to 609 residues: Putative 4-coumarate--CoA ligase-like 8 (609 aa).

Residues S194, S195, G196, T197, T198, and K202 each coordinate ATP. Positions 252 and 256 each coordinate (E)-4-coumaroyl-AMP. R274 is a CoA binding site. Residues 276–348 are SBD1; the sequence is SVEKTMAAVE…SCFPAVNLGQ (73 aa). Residues G326, Q348, T353, and M361 each coordinate (E)-4-coumaroyl-AMP. Residues Q348 and T353 each coordinate ATP. Positions 349-450 are SBD2; sequence CYGLTETTGI…VRGPSTMRGY (102 aa). ATP-binding residues include D482 and R497. Positions 499 and 503 each coordinate (E)-4-coumaroyl-AMP. A CoA-binding site is contributed by A506. ATP is bound at residue K589.

Belongs to the ATP-dependent AMP-binding enzyme family. Mg(2+) serves as cofactor.

The enzyme catalyses (E)-4-coumarate + ATP + CoA = (E)-4-coumaroyl-CoA + AMP + diphosphate. It carries out the reaction (E)-4-coumarate + ATP + H(+) = (E)-4-coumaroyl-AMP + diphosphate. The catalysed reaction is (E)-4-coumaroyl-AMP + CoA = (E)-4-coumaroyl-CoA + AMP + H(+). Functionally, carboxylate--CoA ligase that may use 4-coumarate as substrate. Follows a two-step reaction mechanism, wherein the carboxylate substrate first undergoes adenylation by ATP, followed by a thioesterification in the presence of CoA to yield the final CoA thioester. This is Putative 4-coumarate--CoA ligase-like 8 (4CLL8) from Oryza sativa subsp. japonica (Rice).